The following is a 319-amino-acid chain: Putative ribose-phosphate pyrophosphokinase 2 (319 aa).

ATP-binding positions include 40–42 and 99–100; these read DGE and RQ. Histidine 133 contributes to the Mg(2+) binding site. D-ribose 5-phosphate contacts are provided by residues aspartate 222 and 226–230; that span reads NTGRT.

Belongs to the ribose-phosphate pyrophosphokinase family. Class I subfamily. As to quaternary structure, homohexamer. The cofactor is Mg(2+).

The protein localises to the cytoplasm. It catalyses the reaction D-ribose 5-phosphate + ATP = 5-phospho-alpha-D-ribose 1-diphosphate + AMP + H(+). It participates in metabolic intermediate biosynthesis; 5-phospho-alpha-D-ribose 1-diphosphate biosynthesis; 5-phospho-alpha-D-ribose 1-diphosphate from D-ribose 5-phosphate (route I): step 1/1. In terms of biological role, involved in the biosynthesis of the central metabolite phospho-alpha-D-ribosyl-1-pyrophosphate (PRPP) via the transfer of pyrophosphoryl group from ATP to 1-hydroxyl of ribose-5-phosphate (Rib-5-P). This is Putative ribose-phosphate pyrophosphokinase 2 from Streptococcus pneumoniae serotype 4 (strain ATCC BAA-334 / TIGR4).